We begin with the raw amino-acid sequence, 388 residues long: MNVHEFQAKGILSGFDVRVPKGVVVRSVEEVDSALGSLAAGIVAVKAQIHAGGRGKAGGVKIGKAREEVADLVKSMLGSVLVTHQTSAAGQKVHAVYLEEGVSIKKEYYLGAVVDRKAGMVSVIFSSEGGMDIEEVAHSRPEMVVVVNVDPVYGFLDFHGRKLCYGLGLKKEQVVQITAMARKVCRALMETDASQVEINPLVETTCGEFIALDAKMTFDDNGLFRRPEIVKLTDPHEYSEEELEAAKYGLSYIKLDGNIGCMVNGAGLAMATMDIVKYYGGEPANFLDVGGGASKDTVREAFKIILRSGVDGILVNIFGGIMRCDVIAAGIIESAKEIGVSVPMVVRLSGTNYKIGKEMLDASGLSIVTAENLDEAARFVVDLVGKRG.

An ATP-grasp domain is found at 9-244 (KGILSGFDVR…PHEYSEEELE (236 aa)). ATP contacts are provided by residues Lys-46, 53–55 (GRG), Glu-99, Val-102, and Glu-107. 2 residues coordinate Mg(2+): Asn-199 and Asp-213. Residues Asn-264 and 320-322 (GIM) each bind substrate.

Belongs to the succinate/malate CoA ligase beta subunit family. As to quaternary structure, heterotetramer of two alpha and two beta subunits. The cofactor is Mg(2+).

The catalysed reaction is succinate + ATP + CoA = succinyl-CoA + ADP + phosphate. It catalyses the reaction GTP + succinate + CoA = succinyl-CoA + GDP + phosphate. The protein operates within carbohydrate metabolism; tricarboxylic acid cycle; succinate from succinyl-CoA (ligase route): step 1/1. Its function is as follows. Succinyl-CoA synthetase functions in the citric acid cycle (TCA), coupling the hydrolysis of succinyl-CoA to the synthesis of either ATP or GTP and thus represents the only step of substrate-level phosphorylation in the TCA. The beta subunit provides nucleotide specificity of the enzyme and binds the substrate succinate, while the binding sites for coenzyme A and phosphate are found in the alpha subunit. The chain is Succinate--CoA ligase [ADP-forming] subunit beta from Anaplasma phagocytophilum (strain HZ).